The chain runs to 156 residues: MSGHGAPTTDATTLDASTLRVAVVAASWHTTIMDGLLDGARRALADARAGHVVQVRVPGSFELPVAASRLAGDVDAVVALGVVVRGGTPHFDYVCHAATSGLTEVSVRTGTPVGFGLLTCDTEEQGLDRAGLEGSHEDKGYEAAHAALSTALTLGY.

Residues Trp28, 60 to 62, and 82 to 84 contribute to the 5-amino-6-(D-ribitylamino)uracil site; these read SFE and VVV. 87 to 88 is a binding site for (2S)-2-hydroxy-3-oxobutyl phosphate; sequence GT. The active-site Proton donor is His90. Position 115 (Phe115) interacts with 5-amino-6-(D-ribitylamino)uracil. Arg129 serves as a coordination point for (2S)-2-hydroxy-3-oxobutyl phosphate.

This sequence belongs to the DMRL synthase family.

The catalysed reaction is (2S)-2-hydroxy-3-oxobutyl phosphate + 5-amino-6-(D-ribitylamino)uracil = 6,7-dimethyl-8-(1-D-ribityl)lumazine + phosphate + 2 H2O + H(+). It participates in cofactor biosynthesis; riboflavin biosynthesis; riboflavin from 2-hydroxy-3-oxobutyl phosphate and 5-amino-6-(D-ribitylamino)uracil: step 1/2. Functionally, catalyzes the formation of 6,7-dimethyl-8-ribityllumazine by condensation of 5-amino-6-(D-ribitylamino)uracil with 3,4-dihydroxy-2-butanone 4-phosphate. This is the penultimate step in the biosynthesis of riboflavin. The chain is 6,7-dimethyl-8-ribityllumazine synthase from Kocuria rhizophila (strain ATCC 9341 / DSM 348 / NBRC 103217 / DC2201).